The following is a 199-amino-acid chain: NAD(P)H dehydrogenase (quinone) (199 aa).

The Flavodoxin-like domain occupies 4–190; the sequence is MLVLYYSAYG…DGARFQGRRV (187 aa). FMN contacts are provided by residues 10–15 and 78–80; these read SAYGYM and TRY. NAD(+) is bound at residue Y12. Residue W98 participates in substrate binding. FMN contacts are provided by residues 113-119 and H134; that span reads STATQHG. The tract at residues 157–181 is disordered; sequence GGAPYGMTTTADGDGSRQPSAQELD. Over residues 163–177 the composition is skewed to polar residues; it reads MTTTADGDGSRQPSA.

This sequence belongs to the WrbA family. FMN serves as cofactor.

The enzyme catalyses a quinone + NADH + H(+) = a quinol + NAD(+). It catalyses the reaction a quinone + NADPH + H(+) = a quinol + NADP(+). The chain is NAD(P)H dehydrogenase (quinone) from Brucella melitensis biotype 2 (strain ATCC 23457).